The following is a 444-amino-acid chain: Phosphoglucosamine mutase (444 aa).

Ser-101 (phosphoserine intermediate) is an active-site residue. Positions 101, 239, 241, and 243 each coordinate Mg(2+). Ser-101 is modified (phosphoserine).

The protein belongs to the phosphohexose mutase family. Requires Mg(2+) as cofactor. Activated by phosphorylation.

The catalysed reaction is alpha-D-glucosamine 1-phosphate = D-glucosamine 6-phosphate. Catalyzes the conversion of glucosamine-6-phosphate to glucosamine-1-phosphate. The polypeptide is Phosphoglucosamine mutase (Alcanivorax borkumensis (strain ATCC 700651 / DSM 11573 / NCIMB 13689 / SK2)).